Consider the following 176-residue polypeptide: PPE family protein PPE57 (176 aa).

This sequence belongs to the mycobacterial PPE family. Interacts with human TLR2.

The protein resides in the secreted. It localises to the cell wall. The protein localises to the cell surface. Plays a key role in regulating innate and adaptive immune responses through human Toll-like receptor 2 (TLR2). Interacts with TLR2, leading to the subsequent activation of the mitogen-activated protein kinase (MAPK) and nuclear factor kappa B (NF-kappa-B) signaling pathways. Induces macrophage activation by augmenting the expression of several cell surface molecules (CD40, CD80, CD86 and MHC class II) and pro-inflammatory cytokines (TNF-alpha, IL-6 and IL-12p40) within macrophages. Also participates in adaptive immunity by directing Th1-polarised immune responses. Stimulates specific humoral and cellular immune responses in tuberculosis (TB) patients. Induces a strong IgG(1) antibody response and an increased Th1/Th2 type immune response in mice. This chain is PPE family protein PPE57, found in Mycobacterium tuberculosis (strain ATCC 25618 / H37Rv).